A 454-amino-acid chain; its full sequence is UPF0210 protein Blon_2054/BLIJ_2131 (454 aa).

It belongs to the UPF0210 family. Homodimer.

The chain is UPF0210 protein Blon_2054/BLIJ_2131 from Bifidobacterium longum subsp. infantis (strain ATCC 15697 / DSM 20088 / JCM 1222 / NCTC 11817 / S12).